Consider the following 578-residue polypeptide: Probable methylcrotonoyl-CoA carboxylase beta chain, mitochondrial (578 aa).

The transit peptide at 1 to 29 (MIRLNWLFRSSSVLLRSQVRLLHVGDANV) directs the protein to the mitochondrion. The CoA carboxyltransferase N-terminal domain maps to 48-305 (MASLVGDLRN…SATNSYNDQL (258 aa)). The interval 48-570 (MASLVGDLRN…KAALNNAGQE (523 aa)) is carboxyltransferase. The 250-residue stretch at 321 to 570 (AVEEPRYDAE…KAALNNAGQE (250 aa)) folds into the CoA carboxyltransferase C-terminal domain. The tract at residues 355 to 388 (DGSRFTEFKKLYGETLVCGFAKLYGHTVGIVGNN) is acyl-CoA binding.

This sequence belongs to the AccD/PCCB family. Expressed in third instar larval ring gland (lateral and medial secretory cells and corpus cardiacum cells) and CNS.

The protein localises to the mitochondrion matrix. The enzyme catalyses 3-methylbut-2-enoyl-CoA + hydrogencarbonate + ATP = 3-methyl-(2E)-glutaconyl-CoA + ADP + phosphate + H(+). It participates in amino-acid degradation; L-leucine degradation; (S)-3-hydroxy-3-methylglutaryl-CoA from 3-isovaleryl-CoA: step 2/3. Its function is as follows. Carboxyltransferase subunit of the 3-methylcrotonyl-CoA carboxylase, an enzyme that catalyzes the conversion of 3-methylcrotonyl-CoA to 3-methylglutaconyl-CoA, a critical step for leucine and isovaleric acid catabolism. Vital for adult survival. This is Probable methylcrotonoyl-CoA carboxylase beta chain, mitochondrial from Drosophila melanogaster (Fruit fly).